The chain runs to 333 residues: 1,5-anhydro-D-fructose reductase (333 aa).

NADP(+)-binding positions include 9–12 (ASTI), 33–34 (SS), Arg38, 71–76 (TTNELH), 93–94 (EK), Asn120, 162–163 (WR), and Tyr283.

Belongs to the Gfo/Idh/MocA family. In terms of assembly, monomer.

It carries out the reaction 1,5-anhydro-D-mannitol + NADP(+) = 1,5-anhydro-D-fructose + NADPH + H(+). Its function is as follows. Catalyzes the NADPH-specific reduction of 1,5-anhydro-D-fructose to 1,5-anhydro-D-mannitol. The polypeptide is 1,5-anhydro-D-fructose reductase (afr) (Rhizobium meliloti (strain 1021) (Ensifer meliloti)).